The primary structure comprises 62 residues: Photosystem II reaction center protein Z (62 aa).

2 helical membrane-spanning segments follow: residues 8-28 (LVVA…ITLS) and 41-61 (VTAS…NSFV).

Belongs to the PsbZ family. In terms of assembly, PSII is composed of 1 copy each of membrane proteins PsbA, PsbB, PsbC, PsbD, PsbE, PsbF, PsbH, PsbI, PsbJ, PsbK, PsbL, PsbM, PsbT, PsbX, PsbY, PsbZ, Psb30/Ycf12, at least 3 peripheral proteins of the oxygen-evolving complex and a large number of cofactors. It forms dimeric complexes.

It is found in the plastid. Its subcellular location is the chloroplast thylakoid membrane. Functionally, may control the interaction of photosystem II (PSII) cores with the light-harvesting antenna, regulates electron flow through the 2 photosystem reaction centers. PSII is a light-driven water plastoquinone oxidoreductase, using light energy to abstract electrons from H(2)O, generating a proton gradient subsequently used for ATP formation. The sequence is that of Photosystem II reaction center protein Z from Cyanidioschyzon merolae (strain NIES-3377 / 10D) (Unicellular red alga).